Consider the following 122-residue polypeptide: Large ribosomal subunit protein uL14c (122 aa).

This sequence belongs to the universal ribosomal protein uL14 family. In terms of assembly, part of the 50S ribosomal subunit.

The protein localises to the plastid. The protein resides in the chloroplast. In terms of biological role, binds to 23S rRNA. The chain is Large ribosomal subunit protein uL14c from Gracilaria tenuistipitata var. liui (Red alga).